A 156-amino-acid chain; its full sequence is Enhancer of split M1 protein (156 aa).

The N-terminal stretch at 1–19 (MMSQTLTLCCLALVACVYG) is a signal peptide. 2 Kazal-like domains span residues 23–81 (STND…AWCS) and 96–156 (KLEV…EEKC). 5 cysteine pairs are disulfide-bonded: cysteine 29–cysteine 62, cysteine 33–cysteine 55, cysteine 102–cysteine 135, cysteine 106–cysteine 128, and cysteine 114–cysteine 156.

This is Enhancer of split M1 protein (Kaz-m1) from Drosophila melanogaster (Fruit fly).